The sequence spans 348 residues: Holliday junction branch migration complex subunit RuvB (348 aa).

Positions 1–181 are large ATPase domain (RuvB-L); sequence MEERMITPQQ…FGVISRLEFY (181 aa). ATP is bound by residues Leu20, Arg21, Gly62, Lys65, Thr66, Thr67, Arg171, Tyr181, and Arg218. Residue Thr66 participates in Mg(2+) binding. Positions 182–252 are small ATPAse domain (RuvB-S); that stretch reads EVEDLIRIIT…LAGKSLDRLE (71 aa). Residues 255–348 are head domain (RuvB-H); it reads PAGLDRIDQK…GDSLFDAAED (94 aa). Arg310 and Arg315 together coordinate DNA. Positions 329–348 are disordered; that stretch reads VNSSHQEGGQGDSLFDAAED.

This sequence belongs to the RuvB family. In terms of assembly, homohexamer. Forms an RuvA(8)-RuvB(12)-Holliday junction (HJ) complex. HJ DNA is sandwiched between 2 RuvA tetramers; dsDNA enters through RuvA and exits via RuvB. An RuvB hexamer assembles on each DNA strand where it exits the tetramer. Each RuvB hexamer is contacted by two RuvA subunits (via domain III) on 2 adjacent RuvB subunits; this complex drives branch migration. In the full resolvosome a probable DNA-RuvA(4)-RuvB(12)-RuvC(2) complex forms which resolves the HJ.

Its subcellular location is the cytoplasm. The enzyme catalyses ATP + H2O = ADP + phosphate + H(+). Functionally, the RuvA-RuvB-RuvC complex processes Holliday junction (HJ) DNA during genetic recombination and DNA repair, while the RuvA-RuvB complex plays an important role in the rescue of blocked DNA replication forks via replication fork reversal (RFR). RuvA specifically binds to HJ cruciform DNA, conferring on it an open structure. The RuvB hexamer acts as an ATP-dependent pump, pulling dsDNA into and through the RuvAB complex. RuvB forms 2 homohexamers on either side of HJ DNA bound by 1 or 2 RuvA tetramers; 4 subunits per hexamer contact DNA at a time. Coordinated motions by a converter formed by DNA-disengaged RuvB subunits stimulates ATP hydrolysis and nucleotide exchange. Immobilization of the converter enables RuvB to convert the ATP-contained energy into a lever motion, pulling 2 nucleotides of DNA out of the RuvA tetramer per ATP hydrolyzed, thus driving DNA branch migration. The RuvB motors rotate together with the DNA substrate, which together with the progressing nucleotide cycle form the mechanistic basis for DNA recombination by continuous HJ branch migration. Branch migration allows RuvC to scan DNA until it finds its consensus sequence, where it cleaves and resolves cruciform DNA. In Desulfitobacterium hafniense (strain DSM 10664 / DCB-2), this protein is Holliday junction branch migration complex subunit RuvB.